Consider the following 262-residue polypeptide: MSDLKLSPLVIKLGGAALDCAETLSKLFGAIAQYQNQAQRRIVIVHGGGYLVDDLMAKLQLKSVKKDGLRVTPYDQIPIIAGALAGTANKMLQGQAIKDGINAVGLSLADGGLCHVEELDPELGAVGKATPGDSTLLQAILATGAMPIISSIGLTAQGQMMNVNADQAAVAVAGALDAELVLLSDVSGVLDGKGHLIATLDAKQADALIAGKVITDGMIVKVKAALEAAQDLGRPIEVATWRYPEKLAKLFGGESIGTRFLP.

Substrate is bound by residues 48–49, Arg70, and Asn162; that span reads GG.

It belongs to the acetylglutamate kinase family. ArgB subfamily.

It is found in the cytoplasm. It catalyses the reaction N-acetyl-L-glutamate + ATP = N-acetyl-L-glutamyl 5-phosphate + ADP. It functions in the pathway amino-acid biosynthesis; L-arginine biosynthesis; N(2)-acetyl-L-ornithine from L-glutamate: step 2/4. In terms of biological role, catalyzes the ATP-dependent phosphorylation of N-acetyl-L-glutamate. The chain is Acetylglutamate kinase from Vibrio cholerae serotype O1 (strain ATCC 39541 / Classical Ogawa 395 / O395).